Consider the following 150-residue polypeptide: Ribosome maturation factor RimP (150 aa).

It belongs to the RimP family.

The protein resides in the cytoplasm. In terms of biological role, required for maturation of 30S ribosomal subunits. This Thermotoga maritima (strain ATCC 43589 / DSM 3109 / JCM 10099 / NBRC 100826 / MSB8) protein is Ribosome maturation factor RimP.